The following is a 147-amino-acid chain: Putative pre-16S rRNA nuclease (147 aa).

The protein belongs to the YqgF nuclease family.

Its subcellular location is the cytoplasm. Its function is as follows. Could be a nuclease involved in processing of the 5'-end of pre-16S rRNA. In Ureaplasma parvum serovar 3 (strain ATCC 27815 / 27 / NCTC 11736), this protein is Putative pre-16S rRNA nuclease.